The chain runs to 387 residues: Putative glutamate--cysteine ligase 2 (387 aa).

The protein belongs to the glutamate--cysteine ligase type 2 family. YbdK subfamily.

It catalyses the reaction L-cysteine + L-glutamate + ATP = gamma-L-glutamyl-L-cysteine + ADP + phosphate + H(+). In terms of biological role, ATP-dependent carboxylate-amine ligase which exhibits weak glutamate--cysteine ligase activity. The polypeptide is Putative glutamate--cysteine ligase 2 (Trichormus variabilis (strain ATCC 29413 / PCC 7937) (Anabaena variabilis)).